The sequence spans 367 residues: Carbamoyl-phosphate synthase (367 aa).

Residues K111 to A296 enclose the ATP-grasp domain. K137–S186 provides a ligand contact to ATP. Residues D253, E267, and N269 each coordinate Mg(2+). Mn(2+)-binding residues include D253, E267, and N269.

The protein belongs to the small carbamoyl-phosphate synthase family. In terms of assembly, forms homodimers and homotetramers (dimers of dimers). It depends on Mg(2+) as a cofactor. Mn(2+) serves as cofactor.

It carries out the reaction hydrogencarbonate + NH4(+) + 2 ATP = carbamoyl phosphate + 2 ADP + phosphate + 2 H(+). Functionally, catalyzes the synthesis of carbamoyl phosphate from ATP, ammonium and bicarbonate. Proceeds via a three-step mechanism, i.e. the phosphorylation of hydrogencarbonate to carboxyphosphate, a nucleophilic attack of ammonia on carboxyphosphate yielding carbamate, and the phosphorylation of carbamate forming carbamoyl phosphate. In M.smithii, the predominant archaeon in the human gut, one function of this enzyme may be to sequester ammonia, a scarce nutrient in the intestine which is the major source of nitrogen in M.smithii for the biosynthesis of nucleotides, amino acids, and many other metabolites. The protein is Carbamoyl-phosphate synthase of Methanobrevibacter smithii (strain ATCC 35061 / DSM 861 / OCM 144 / PS).